The following is a 328-amino-acid chain: GTPase Obg (328 aa).

Residues 2-160 enclose the Obg domain; that stretch reads YNFKDSVNIT…LSVRLELFLV (159 aa). Residues 161–326 form the OBG-type G domain; the sequence is ADIGLVGLPN…LIKEFFILAK (166 aa). GTP-binding positions include 167 to 174, 192 to 196, 213 to 216, 280 to 283, and 307 to 309; these read GLPNAGKS, FTTKI, DIPG, NKLD, and SIY. 2 residues coordinate Mg(2+): Ser-174 and Thr-194.

This sequence belongs to the TRAFAC class OBG-HflX-like GTPase superfamily. OBG GTPase family. Monomer. Mg(2+) serves as cofactor.

Its subcellular location is the cytoplasm. An essential GTPase which binds GTP, GDP and possibly (p)ppGpp with moderate affinity, with high nucleotide exchange rates and a fairly low GTP hydrolysis rate. Plays a role in control of the cell cycle, stress response, ribosome biogenesis and in those bacteria that undergo differentiation, in morphogenesis control. The sequence is that of GTPase Obg from Borreliella burgdorferi (strain ATCC 35210 / DSM 4680 / CIP 102532 / B31) (Borrelia burgdorferi).